Here is a 214-residue protein sequence, read N- to C-terminus: Pyridoxine/pyridoxamine 5'-phosphate oxidase (214 aa).

Substrate is bound by residues 10-13 and K68; that span reads RLNY. FMN is bound by residues 63 to 68, 78 to 79, K85, and Q107; these read RMVLLK and YT. Residues Y125, R129, and S133 each contribute to the substrate site. FMN-binding positions include 142–143 and W187; that span reads QS. A substrate-binding site is contributed by 193 to 195; the sequence is RLH. R197 is a binding site for FMN.

The protein belongs to the pyridoxamine 5'-phosphate oxidase family. As to quaternary structure, homodimer. The cofactor is FMN.

The catalysed reaction is pyridoxamine 5'-phosphate + O2 + H2O = pyridoxal 5'-phosphate + H2O2 + NH4(+). The enzyme catalyses pyridoxine 5'-phosphate + O2 = pyridoxal 5'-phosphate + H2O2. It functions in the pathway cofactor metabolism; pyridoxal 5'-phosphate salvage; pyridoxal 5'-phosphate from pyridoxamine 5'-phosphate: step 1/1. It participates in cofactor metabolism; pyridoxal 5'-phosphate salvage; pyridoxal 5'-phosphate from pyridoxine 5'-phosphate: step 1/1. Catalyzes the oxidation of either pyridoxine 5'-phosphate (PNP) or pyridoxamine 5'-phosphate (PMP) into pyridoxal 5'-phosphate (PLP). This chain is Pyridoxine/pyridoxamine 5'-phosphate oxidase, found in Synechocystis sp. (strain ATCC 27184 / PCC 6803 / Kazusa).